A 396-amino-acid polypeptide reads, in one-letter code: Fumarate--(S)-2,3-diaminopropanoate ligase (396 aa).

The enzyme catalyses (S)-2,3-diaminopropanoate + fumarate + ATP = N(3)-fumaroyl-(S)-2,3-diaminopropanoate + AMP + diphosphate. It functions in the pathway antibiotic biosynthesis. Involved in dapdiamide antibiotics biosynthesis. Ligates fumarate and 2,3-diaminopropionate (DAP) to form N-beta-fumaroyl-DAP. Can also form N-succinoyl-DAP from succinate and DAP, with lower efficiency. The sequence is that of Fumarate--(S)-2,3-diaminopropanoate ligase from Enterobacter agglomerans (Erwinia herbicola).